Here is a 351-residue protein sequence, read N- to C-terminus: Holliday junction branch migration complex subunit RuvB (351 aa).

Residues 1 to 189 (MTAHDADWSD…FGFTAHMDFY (189 aa)) form a large ATPase domain (RuvB-L) region. Residues Leu-28, Arg-29, Gly-70, Lys-73, Thr-74, Ser-75, 136–138 (EDF), Arg-179, Tyr-189, and Arg-226 contribute to the ATP site. Thr-74 contacts Mg(2+). Residues 190–260 (EPAELQQVLA…VAKAALAVYD (71 aa)) form a small ATPAse domain (RuvB-S) region. The tract at residues 263–351 (ELGLDRLDRA…AGLGQPGLFD (89 aa)) is head domain (RuvB-H). Residues Arg-318 and Arg-323 each contribute to the DNA site.

It belongs to the RuvB family. As to quaternary structure, homohexamer. Forms an RuvA(8)-RuvB(12)-Holliday junction (HJ) complex. HJ DNA is sandwiched between 2 RuvA tetramers; dsDNA enters through RuvA and exits via RuvB. An RuvB hexamer assembles on each DNA strand where it exits the tetramer. Each RuvB hexamer is contacted by two RuvA subunits (via domain III) on 2 adjacent RuvB subunits; this complex drives branch migration. In the full resolvosome a probable DNA-RuvA(4)-RuvB(12)-RuvC(2) complex forms which resolves the HJ.

The protein localises to the cytoplasm. The catalysed reaction is ATP + H2O = ADP + phosphate + H(+). In terms of biological role, the RuvA-RuvB-RuvC complex processes Holliday junction (HJ) DNA during genetic recombination and DNA repair, while the RuvA-RuvB complex plays an important role in the rescue of blocked DNA replication forks via replication fork reversal (RFR). RuvA specifically binds to HJ cruciform DNA, conferring on it an open structure. The RuvB hexamer acts as an ATP-dependent pump, pulling dsDNA into and through the RuvAB complex. RuvB forms 2 homohexamers on either side of HJ DNA bound by 1 or 2 RuvA tetramers; 4 subunits per hexamer contact DNA at a time. Coordinated motions by a converter formed by DNA-disengaged RuvB subunits stimulates ATP hydrolysis and nucleotide exchange. Immobilization of the converter enables RuvB to convert the ATP-contained energy into a lever motion, pulling 2 nucleotides of DNA out of the RuvA tetramer per ATP hydrolyzed, thus driving DNA branch migration. The RuvB motors rotate together with the DNA substrate, which together with the progressing nucleotide cycle form the mechanistic basis for DNA recombination by continuous HJ branch migration. Branch migration allows RuvC to scan DNA until it finds its consensus sequence, where it cleaves and resolves cruciform DNA. The protein is Holliday junction branch migration complex subunit RuvB of Mycobacterium avium (strain 104).